Here is a 411-residue protein sequence, read N- to C-terminus: ATP-dependent Clp protease ATP-binding subunit ClpX (411 aa).

The ClpX-type ZB domain maps to 1-49; that stretch reads MSDKNIRCSFCGRTQKEVKKLIAGPGVYICDECVKLAYDIIEEEDSEEI. Zn(2+) contacts are provided by Cys-8, Cys-11, Cys-30, and Cys-33. 115–122 provides a ligand contact to ATP; that stretch reads PTGVGKTL.

The protein belongs to the ClpX chaperone family. In terms of assembly, component of the ClpX-ClpP complex. Forms a hexameric ring that, in the presence of ATP, binds to fourteen ClpP subunits assembled into a disk-like structure with a central cavity, resembling the structure of eukaryotic proteasomes.

In terms of biological role, ATP-dependent specificity component of the Clp protease. It directs the protease to specific substrates. Can perform chaperone functions in the absence of ClpP. The chain is ATP-dependent Clp protease ATP-binding subunit ClpX from Dictyoglomus turgidum (strain DSM 6724 / Z-1310).